A 208-amino-acid chain; its full sequence is Protein late bloomer (208 aa).

4 consecutive transmembrane segments (helical) span residues 10–30 (IASI…IGWI), 41–61 (FVIA…LGIF), 67–87 (SVVL…LQIV), and 174–194 (FIIV…LAVF).

This sequence belongs to the tetraspanin (TM4SF) family. As to expression, transiently expressed on motor axons, growth cones and terminal arbors.

It localises to the membrane. The protein localises to the synapse. In terms of biological role, facilitates synapse formation. This chain is Protein late bloomer (lbm), found in Drosophila melanogaster (Fruit fly).